Consider the following 99-residue polypeptide: Late cornified envelope protein 4A (99 aa).

The interval 78–99 is disordered; the sequence is CYGSGSGQQSGGSGCCSGGGCC. The segment covering 81–99 has biased composition (gly residues); it reads SGSGQQSGGSGCCSGGGCC.

The protein belongs to the LCE family. Interacts with CYSRT1; the interaction is direct. In terms of tissue distribution, skin-specific. Expression was readily detected in adult trunk skin, adult arm skin, fetal skin, penal skin, vulva, esophagus and tongue. Not expressed in the cervix, rectum, lung, colon, or placenta.

Precursors of the cornified envelope of the stratum corneum. The chain is Late cornified envelope protein 4A (LCE4A) from Homo sapiens (Human).